The chain runs to 586 residues: MSPIENSDSAAWRELEAVRAEAAALRRQLADSPDRTRELEARIDSLTIRNTKLMDTLKEARQQLVALREEVDRLGQPPSGYGILIGVYDDQTVDVFTSGRKMRLTCSPNIDTSTLSYGQTVRLNEALTVVEANEYDAVGEIGTLREILDDGRRALVVGHADEERVVWLAGPLAKVAEEDDLDDPDSPVRKLRPGDSLLVDTKAGFAFERIPKAEVEDLVLEEVPDVDYSDIGGLGRQIEQIRDAVELPFLHKDLFREYELRPPKGVLLYGPPGCGKTLIAKAVANSLAKKIAEARGEDAKEAKSFFLNIKGPELLNKFVGETERHIRIIFQRAREKASEGTPVIVFFDEMDSIFRTRGSGVSSDVETTVVPQLLSEIDGVEGLENVIVIGASNREDMIDPAILRPGRLDVKIKIERPDAESAQDIFSKYLTEDLPLHADDLAEFGGDKAACVRAMIERVVDRMYAESEDNRFLEVTYANGDKEVLYFKDFNSGAMIQNIVDRAKKYAIKSVLETGSPGLRIQHLYDSIVDEFSENEDLPNTTNPDDWARISGKKGERIVYIRTLVTGKNASASRAIDTESNTGQYL.

Residues 11–76 are a coiled coil; the sequence is AWRELEAVRA…LREEVDRLGQ (66 aa). An ATP-binding site is contributed by 273–278; the sequence is GCGKTL. The docks into pockets in the proteasome alpha-ring stretch occupies residues 585–586; sequence YL.

It belongs to the AAA ATPase family. Homohexamer. Assembles into a hexameric ring structure that caps the 20S proteasome core. Strongly interacts with the prokaryotic ubiquitin-like protein Pup through a hydrophobic interface; the interacting region of ARC lies in its N-terminal coiled-coil domain. There is one Pup binding site per ARC hexamer ring. Upon ATP-binding, the C-terminus of ARC interacts with the alpha-rings of the proteasome core, possibly by binding to the intersubunit pockets.

It functions in the pathway protein degradation; proteasomal Pup-dependent pathway. ATPase which is responsible for recognizing, binding, unfolding and translocation of pupylated proteins into the bacterial 20S proteasome core particle. May be essential for opening the gate of the 20S proteasome via an interaction with its C-terminus, thereby allowing substrate entry and access to the site of proteolysis. Thus, the C-termini of the proteasomal ATPase may function like a 'key in a lock' to induce gate opening and therefore regulate proteolysis. The polypeptide is Proteasome-associated ATPase (Nocardia farcinica (strain IFM 10152)).